The primary structure comprises 557 residues: Thermosome subunit 2 (557 aa).

The tract at residues 527–557 (DLSTGGDDDEEGGAPGGMGGMGGMGGMGGAM) is disordered. The span at 539–557 (GAPGGMGGMGGMGGMGGAM) shows a compositional bias: gly residues.

This sequence belongs to the TCP-1 chaperonin family. In terms of assembly, the thermosome or CCT complex is a oligomeric complex of two octameric double-ring structures; the complex is probably a heterooligomer of CCT1, CCT2 and CCT3 with yet unknown stoichiometry.

Molecular chaperone that assists in the folding or refolding of nascent or denatured proteins along with ATP hydrolysis. ATPase activity is highest in thermosome assemblies containing CCT1:CCT2, followed by assemblies containing CCT1:CCT2:CCT3. Seems to contribute to thermosome ATPase activity. Not required for growth. In Haloferax volcanii (strain ATCC 29605 / DSM 3757 / JCM 8879 / NBRC 14742 / NCIMB 2012 / VKM B-1768 / DS2) (Halobacterium volcanii), this protein is Thermosome subunit 2 (cct2).